Here is a 102-residue protein sequence, read N- to C-terminus: UPF0251 protein ASA_1331 (102 aa).

The protein belongs to the UPF0251 family.

In Aeromonas salmonicida (strain A449), this protein is UPF0251 protein ASA_1331.